Here is a 473-residue protein sequence, read N- to C-terminus: Gamma-aminobutyric acid receptor subunit beta-3 (473 aa).

The signal sequence occupies residues 1-25; the sequence is MWGFAGGRLFGIFSAPVLVAVVCCA. Residues 26–246 lie on the Extracellular side of the membrane; the sequence is QSVNDPGNMS…FRLKRNIGYF (221 aa). Asn-33 and Asn-105 each carry an N-linked (GlcNAc...) asparagine glycan. Position 122 (Tyr-122) interacts with histamine. A disulfide bridge connects residues Cys-161 and Cys-175. N-linked (GlcNAc...) asparagine glycosylation is present at Asn-174. Residues Glu-180, Tyr-182, and Thr-227 each coordinate 4-aminobutanoate. Residues 181–182 and Thr-227 contribute to the histamine site; that span reads SY. Residues 247–267 form a helical membrane-spanning segment; sequence ILQTYMPSILITILSWVSFWI. Residues 268 to 271 are Cytoplasmic-facing; the sequence is NYDA. A helical transmembrane segment spans residues 272-292; that stretch reads SAARVALGITTVLTMTTINTH. The Extracellular portion of the chain corresponds to 293-304; sequence LRETLPKIPYVK. Residues 305-328 form a helical membrane-spanning segment; it reads AIDMYLMGCFVFVFLALLEYAFVN. Residues 329-447 lie on the Cytoplasmic side of the membrane; that stretch reads YIFFGRGPQR…KIPDLTDVNA (119 aa). A helical membrane pass occupies residues 448-470; the sequence is IDRWSRIVFPFTFSLFNLVYWLY. The Extracellular segment spans residues 471–473; that stretch reads YVN.

It belongs to the ligand-gated ion channel (TC 1.A.9) family. Gamma-aminobutyric acid receptor (TC 1.A.9.5) subfamily. GABRB3 sub-subfamily. In terms of assembly, heteropentamer, formed by a combination of alpha (GABRA1-6), beta (GABRB1-3), gamma (GABRG1-3), delta (GABRD), epsilon (GABRE), rho (GABRR1-3), pi (GABRP) and theta (GABRQ) chains, each subunit exhibiting distinct physiological and pharmacological properties. Can form functional homopentamers (in vitro). Interacts with UBQLN1. May interact with KIF21B. Identified in a complex of 720 kDa composed of LHFPL4, NLGN2, GABRA1, GABRB2, GABRG2 and GABRB3. Interacts with LHFPL4. Interacts with GIT1; this interaction is required for synaptic GABRB3 surface stability and inhibitory synapse strength.

The protein localises to the postsynaptic cell membrane. It localises to the cell membrane. It is found in the cytoplasmic vesicle membrane. It carries out the reaction chloride(in) = chloride(out). Its activity is regulated as follows. Potentiated by histamine. Its function is as follows. Beta subunit of the heteropentameric ligand-gated chloride channel gated by gamma-aminobutyric acid (GABA), a major inhibitory neurotransmitter in the brain. GABA-gated chloride channels, also named GABA(A) receptors (GABAAR), consist of five subunits arranged around a central pore and contain GABA active binding site(s) located at the alpha and beta subunit interface(s). GABAARs containing beta-3/GABRB3 subunit are found at both synaptic and extrasynaptic sites. When activated by GABA, GABAARs selectively allow the flow of chloride anions across the cell membrane down their electrochemical gradient. Chloride influx into the postsynaptic neuron following GABAAR opening decreases the neuron ability to generate a new action potential, thereby reducing nerve transmission. GABAARs containing alpha-1 and beta-3 subunits exhibit synaptogenic activity; the gamma-2 subunit being necessary but not sufficient to induce rapid synaptic contacts formation. Extrasynaptic beta-3 receptors contribute to the tonic GABAergic inhibition. GABAARs containing alpha-1, beta-3 and epsilon subunits may permit spontaneous chloride channel activity while preserving the structural information required for GABA-gated openings. Beta-containing GABAARs can simultaneously bind GABA and histamine where histamine binds at the interface of two neighboring beta subunits, which may be involved in the regulation of sleep and wakefulness. Plays an important role in somatosensation and in the production of antinociception. This chain is Gamma-aminobutyric acid receptor subunit beta-3, found in Mus musculus (Mouse).